A 354-amino-acid chain; its full sequence is UDP-glucose 4-epimerase 1 (354 aa).

An NAD(+)-binding site is contributed by 8-39 (TILVTGGAGYIGSHTVLQLLQLGFRVVVLDNL). Serine 133 contacts substrate. The active-site Proton acceptor is the tyrosine 157.

Belongs to the NAD(P)-dependent epimerase/dehydratase family. NAD(+) is required as a cofactor.

It catalyses the reaction UDP-alpha-D-glucose = UDP-alpha-D-galactose. The protein operates within carbohydrate metabolism; galactose metabolism. Functionally, catalyzes the interconversion between UDP-glucose and UDP-galactose. In Oryza sativa subsp. japonica (Rice), this protein is UDP-glucose 4-epimerase 1 (UGE-1).